The primary structure comprises 424 residues: DNA repair protein Rad60 (424 aa).

Y26 carries the phosphotyrosine modification. A phosphoserine mark is found at S32 and S34. Positions L45–S177 are disordered. The span at K48–N57 shows a compositional bias: basic residues. The segment covering Q77 to R93 has biased composition (basic and acidic residues). S96 is modified (phosphoserine). Positions E104–D123 are enriched in basic and acidic residues. Residues K156–T166 are compositionally biased toward basic residues. The span at S167–S177 shows a compositional bias: low complexity.

In terms of assembly, forms a complex with dgrn; likely required for localization to the nuclear periphery. Interacts with the SMC5-SMC6 complex members SMC5 and SMC6/jnj following ionizing radiation (IR) to induce DNA damage. Interaction between the SMC5-SMC6 complex and the dgrn-Rad60 complex, may stabilize the association of heterochromatic DSBs with the nuclear periphery.

Its subcellular location is the nucleus. The protein localises to the nucleoplasm. In terms of biological role, required for repair of DNA double strand breaks which occur during replication or are induced by ionizing radiation (IR). Functions with dgrn and downstream of the SMC5-SMC6 complex to regulate strand break repair. Likely functions by stabilizing the association of heterochromatic double strand breaks (DSBs) with the nuclear periphery as part of the homologous recombination (HR) repair process. The polypeptide is DNA repair protein Rad60 (Drosophila melanogaster (Fruit fly)).